Here is a 373-residue protein sequence, read N- to C-terminus: Protein-glutamate methylesterase/protein-glutamine glutaminase 2 (373 aa).

The 118-residue stretch at 4–121 folds into the Response regulatory domain; sequence KVLVVDDSGF…SRNPEKVKQL (118 aa). A 4-aspartylphosphate modification is found at aspartate 55. A disordered region spans residues 136–181; it reads FSSYSAPAPQPASAPAPAPSSFASSRSPAPAPAPARAAAPAASANS. The segment covering 143-153 has biased composition (pro residues); sequence APQPASAPAPA. Over residues 154–181 the composition is skewed to low complexity; sequence PSSFASSRSPAPAPAPARAAAPAASANS. Residues 182–370 enclose the CheB-type methylesterase domain; that stretch reads PAPKRKAYKL…LDDIGRHLVE (189 aa). Catalysis depends on residues serine 197, histidine 224, and aspartate 317.

Belongs to the CheB family. In terms of processing, phosphorylated by CheA. Phosphorylation of the N-terminal regulatory domain activates the methylesterase activity.

Its subcellular location is the cytoplasm. It carries out the reaction [protein]-L-glutamate 5-O-methyl ester + H2O = L-glutamyl-[protein] + methanol + H(+). It catalyses the reaction L-glutaminyl-[protein] + H2O = L-glutamyl-[protein] + NH4(+). In terms of biological role, involved in chemotaxis. Part of a chemotaxis signal transduction system that modulates chemotaxis in response to various stimuli. Catalyzes the demethylation of specific methylglutamate residues introduced into the chemoreceptors (methyl-accepting chemotaxis proteins or MCP) by CheR. Also mediates the irreversible deamidation of specific glutamine residues to glutamic acid. The sequence is that of Protein-glutamate methylesterase/protein-glutamine glutaminase 2 from Pseudomonas fluorescens (strain ATCC BAA-477 / NRRL B-23932 / Pf-5).